The following is a 206-amino-acid chain: Large ribosomal subunit protein uL4 (206 aa).

Residues 43–78 form a disordered region; sequence ARSGNRKQKDREEVHHTTKKPWRQKGTGRARAGMSS. The segment covering 49-58 has biased composition (basic and acidic residues); it reads KQKDREEVHH. A compositionally biased stretch (basic residues) spans 59 to 70; that stretch reads TTKKPWRQKGTG.

Belongs to the universal ribosomal protein uL4 family. Part of the 50S ribosomal subunit.

Its function is as follows. One of the primary rRNA binding proteins, this protein initially binds near the 5'-end of the 23S rRNA. It is important during the early stages of 50S assembly. It makes multiple contacts with different domains of the 23S rRNA in the assembled 50S subunit and ribosome. In terms of biological role, forms part of the polypeptide exit tunnel. This chain is Large ribosomal subunit protein uL4, found in Herminiimonas arsenicoxydans.